The primary structure comprises 384 residues: Soluble hydrogenase, small subunit (384 aa).

Lysine 194 carries the post-translational modification N6-(pyridoxal phosphate)lysine.

It belongs to the class-V pyridoxal-phosphate-dependent aminotransferase family. Heterodimer of a large and a small subunit. Pyridoxal 5'-phosphate serves as cofactor.

It localises to the cytoplasm. In terms of biological role, soluble hydrogenase catalyzes both production and consumption of hydrogen from suitable artificial electron donors or acceptors. This subunit catalyzes the tritium-exchange activity. The polypeptide is Soluble hydrogenase, small subunit (Synechococcus sp. (strain PCC 6716)).